Reading from the N-terminus, the 509-residue chain is Steroid 17-alpha-hydroxylase/17,20 lyase (509 aa).

Asn202 serves as a coordination point for substrate. Cys442 is a binding site for heme.

The protein belongs to the cytochrome P450 family. It depends on heme as a cofactor.

It localises to the endoplasmic reticulum membrane. The protein resides in the microsome membrane. The enzyme catalyses a C21-steroid + reduced [NADPH--hemoprotein reductase] + O2 = a 17alpha-hydroxy-C21-steroid + oxidized [NADPH--hemoprotein reductase] + H2O + H(+). It catalyses the reaction progesterone + reduced [NADPH--hemoprotein reductase] + O2 = 17alpha-hydroxyprogesterone + oxidized [NADPH--hemoprotein reductase] + H2O + H(+). The catalysed reaction is pregnenolone + reduced [NADPH--hemoprotein reductase] + O2 = 17alpha-hydroxypregnenolone + oxidized [NADPH--hemoprotein reductase] + H2O + H(+). It carries out the reaction 17alpha-hydroxyprogesterone + reduced [NADPH--hemoprotein reductase] + O2 = androst-4-ene-3,17-dione + acetate + oxidized [NADPH--hemoprotein reductase] + H2O + 2 H(+). The enzyme catalyses 17alpha-hydroxyprogesterone + reduced [NADPH--hemoprotein reductase] + O2 = 16alpha,17alpha-dihydroxyprogesterone + oxidized [NADPH--hemoprotein reductase] + H2O + H(+). It catalyses the reaction 16alpha,17alpha-dihydroxyprogesterone + reduced [NADPH--hemoprotein reductase] + O2 = 6beta,16alpha,17alpha-trihydroxyprogesterone + oxidized [NADPH--hemoprotein reductase] + H2O + H(+). The catalysed reaction is 17alpha-hydroxypregnenolone + reduced [NADPH--hemoprotein reductase] + O2 = 3beta-hydroxyandrost-5-en-17-one + acetate + oxidized [NADPH--hemoprotein reductase] + H2O + 2 H(+). It carries out the reaction 16alpha,17alpha-dihydroxypregnenolone + reduced [NADPH--hemoprotein reductase] + O2 = 3beta,16alpha-dihydroxy-androst-5-en-17-one + acetate + oxidized [NADPH--hemoprotein reductase] + H2O + 2 H(+). The enzyme catalyses 3beta-hydroxyandrost-5-en-17-one + reduced [NADPH--hemoprotein reductase] + O2 = 3beta,16alpha-dihydroxy-androst-5-en-17-one + oxidized [NADPH--hemoprotein reductase] + H2O + H(+). It catalyses the reaction androst-4-ene-3,17-dione + reduced [NADPH--hemoprotein reductase] + O2 = 16alpha-hydroxyandrost-4-ene-3,17-dione + oxidized [NADPH--hemoprotein reductase] + H2O + H(+). Its pathway is steroid hormone biosynthesis. It participates in steroid biosynthesis; glucocorticoid biosynthesis. Regulated predominantly by intracellular cAMP levels. The 17,20-lyase activity is stimulated by cytochrome b5, which acts as an allosteric effector increasing the Vmax of the lyase activity. A cytochrome P450 monooxygenase involved in corticoid and androgen biosynthesis. Catalyzes 17-alpha hydroxylation of C21 steroids, which is common for both pathways. A second oxidative step, required only for androgen synthesis, involves an acyl-carbon cleavage. The 17-alpha hydroxy intermediates, as part of adrenal glucocorticoids biosynthesis pathway, are precursors of cortisol. Hydroxylates steroid hormones, pregnenolone and progesterone to form 17-alpha hydroxy metabolites, followed by the cleavage of the C17-C20 bond to form C19 steroids, dehydroepiandrosterone (DHEA) and androstenedione. Has 16-alpha hydroxylase activity. Catalyzes 16-alpha hydroxylation of 17-alpha hydroxy pregnenolone, followed by the cleavage of the C17-C20 bond to form 16-alpha-hydroxy DHEA. Also 16-alpha hydroxylates androgens, relevant for estriol synthesis. Mechanistically, uses molecular oxygen inserting one oxygen atom into a substrate, and reducing the second into a water molecule, with two electrons provided by NADPH via cytochrome P450 reductase (CPR; NADPH-ferrihemoprotein reductase). The chain is Steroid 17-alpha-hydroxylase/17,20 lyase (CYP17A1) from Sus scrofa (Pig).